The following is a 70-amino-acid chain: UPF0519 protein D (70 aa).

This sequence belongs to the UPF0519 family.

The protein is UPF0519 protein D of Dictyostelium discoideum (Social amoeba).